The sequence spans 175 residues: Gamma-crystallin B (175 aa).

Beta/gamma crystallin 'Greek key' domains lie at 2 to 40 (GKIT…RVDS) and 41 to 83 (GCWM…RLIP). The interval 84-88 (QHSGT) is connecting peptide. Beta/gamma crystallin 'Greek key' domains lie at 89–129 (YRMR…NVME) and 130–172 (GCWV…RRVM).

This sequence belongs to the beta/gamma-crystallin family.

Functionally, crystallins are the dominant structural components of the vertebrate eye lens. The chain is Gamma-crystallin B (Crygb) from Rattus norvegicus (Rat).